Here is a 124-residue protein sequence, read N- to C-terminus: MAKPKGERKGKSAINEVVTREYTVNLHKRLHGVGFKKRAPRAIKEIRKFAEKQMGTPDVRVDTRLNKFLWSKGVRNVPFRVRVRLSRRRNDDEDSAHKLFTLVTYVPVASIKGLQTENVDASQE.

Belongs to the eukaryotic ribosomal protein eL31 family.

The chain is Large ribosomal subunit protein eL31 (RpL31) from Spodoptera frugiperda (Fall armyworm).